Here is a 546-residue protein sequence, read N- to C-terminus: Chaperonin GroEL (546 aa).

ATP-binding positions include 30–33, Lys51, 87–91, Gly415, and Asp496; these read TLGP and DGTTT. A disordered region spans residues 526–546; the sequence is PEDKPAPAMPGGMGGMGGMDF. The span at 536-546 shows a compositional bias: gly residues; it reads GGMGGMGGMDF.

It belongs to the chaperonin (HSP60) family. As to quaternary structure, forms a cylinder of 14 subunits composed of two heptameric rings stacked back-to-back. Interacts with the co-chaperonin GroES.

It is found in the cytoplasm. It carries out the reaction ATP + H2O + a folded polypeptide = ADP + phosphate + an unfolded polypeptide.. Functionally, together with its co-chaperonin GroES, plays an essential role in assisting protein folding. The GroEL-GroES system forms a nano-cage that allows encapsulation of the non-native substrate proteins and provides a physical environment optimized to promote and accelerate protein folding. This Zymomonas mobilis subsp. mobilis (strain ATCC 31821 / ZM4 / CP4) protein is Chaperonin GroEL.